The following is a 170-amino-acid chain: Peptide deformylase (170 aa).

The Fe cation site is built by C91 and H133. Residue E134 is part of the active site. Residue H137 coordinates Fe cation.

Belongs to the polypeptide deformylase family. It depends on Fe(2+) as a cofactor.

The catalysed reaction is N-terminal N-formyl-L-methionyl-[peptide] + H2O = N-terminal L-methionyl-[peptide] + formate. Its function is as follows. Removes the formyl group from the N-terminal Met of newly synthesized proteins. Requires at least a dipeptide for an efficient rate of reaction. N-terminal L-methionine is a prerequisite for activity but the enzyme has broad specificity at other positions. This is Peptide deformylase from Aliivibrio fischeri (strain ATCC 700601 / ES114) (Vibrio fischeri).